We begin with the raw amino-acid sequence, 81 residues long: UPF0248 protein SSO2687 (81 aa).

The protein belongs to the UPF0248 family.

This chain is UPF0248 protein SSO2687, found in Saccharolobus solfataricus (strain ATCC 35092 / DSM 1617 / JCM 11322 / P2) (Sulfolobus solfataricus).